The primary structure comprises 333 residues: MDERLLSGESGYEDADLEYSLRPQTLRQYIGQDKAKHNLEVFIEAAKMREETLDHVLLYGPPGLGKTTLANIIANEMGVNIRTTSGPAIERPGDLAAVLTALQPGDVLFIDEIHRLHRSIEEVLYPAMEDFCLDIVIGKGPSARSVRLDLPPFTLVGATTRAGALSAPLRDRFGVLSRLEYYTVDQLSAIVERTAEVFEVEIDSLAALEIARRARGTPRIANRLLRRVRDFAQVRSDGTIAMEITQMALELLQVDKLGLDHIDHKLLLGIIEKFRGGPVGLETVSATIGEESHTIEDVYEPYLLQIGFLQRTPRGRIVTPLAYEHFGMEMPKV.

Residues 1-182 form a large ATPase domain (RuvB-L) region; it reads MDERLLSGES…FGVLSRLEYY (182 aa). Residues Leu-21, Arg-22, Gly-63, Lys-66, Thr-67, Thr-68, 129 to 131, Arg-172, Tyr-182, and Arg-219 each bind ATP; that span reads EDF. Residue Thr-67 participates in Mg(2+) binding. Residues 183 to 253 form a small ATPAse domain (RuvB-S) region; the sequence is TVDQLSAIVE…ITQMALELLQ (71 aa). Residues 256 to 333 form a head domain (RuvB-H) region; sequence KLGLDHIDHK…EHFGMEMPKV (78 aa). Positions 311 and 316 each coordinate DNA.

The protein belongs to the RuvB family. In terms of assembly, homohexamer. Forms an RuvA(8)-RuvB(12)-Holliday junction (HJ) complex. HJ DNA is sandwiched between 2 RuvA tetramers; dsDNA enters through RuvA and exits via RuvB. An RuvB hexamer assembles on each DNA strand where it exits the tetramer. Each RuvB hexamer is contacted by two RuvA subunits (via domain III) on 2 adjacent RuvB subunits; this complex drives branch migration. In the full resolvosome a probable DNA-RuvA(4)-RuvB(12)-RuvC(2) complex forms which resolves the HJ.

It localises to the cytoplasm. It carries out the reaction ATP + H2O = ADP + phosphate + H(+). Functionally, the RuvA-RuvB-RuvC complex processes Holliday junction (HJ) DNA during genetic recombination and DNA repair, while the RuvA-RuvB complex plays an important role in the rescue of blocked DNA replication forks via replication fork reversal (RFR). RuvA specifically binds to HJ cruciform DNA, conferring on it an open structure. The RuvB hexamer acts as an ATP-dependent pump, pulling dsDNA into and through the RuvAB complex. RuvB forms 2 homohexamers on either side of HJ DNA bound by 1 or 2 RuvA tetramers; 4 subunits per hexamer contact DNA at a time. Coordinated motions by a converter formed by DNA-disengaged RuvB subunits stimulates ATP hydrolysis and nucleotide exchange. Immobilization of the converter enables RuvB to convert the ATP-contained energy into a lever motion, pulling 2 nucleotides of DNA out of the RuvA tetramer per ATP hydrolyzed, thus driving DNA branch migration. The RuvB motors rotate together with the DNA substrate, which together with the progressing nucleotide cycle form the mechanistic basis for DNA recombination by continuous HJ branch migration. Branch migration allows RuvC to scan DNA until it finds its consensus sequence, where it cleaves and resolves cruciform DNA. This Bacillus mycoides (strain KBAB4) (Bacillus weihenstephanensis) protein is Holliday junction branch migration complex subunit RuvB.